The following is a 111-amino-acid chain: Putative splicing factor C222.18 (111 aa).

The RRM domain occupies 18–95 (HTLYIRNFGT…DIIFVEWAKS (78 aa)).

Belongs to the splicing factor SR family.

Its subcellular location is the nucleus. Its function is as follows. Has a role in pre-mRNA splicing where it is involved in spliceosome assembly. In Schizosaccharomyces pombe (strain 972 / ATCC 24843) (Fission yeast), this protein is Putative splicing factor C222.18.